The chain runs to 347 residues: LRP2-binding protein (347 aa).

Residues 59 to 92 form a TPR repeat; the sequence is TLAYFLRGQLYFEEGWYEEALEQFEEIKEKDHQA. Sel1-like repeat units follow at residues 93–125, 133–168, 173–206, 207–242, 243–277, and 297–332; these read TYQLGVMYYDGLGTTLDAEKGVDYMKKILDSPC, FAAAYNLGRAYYEGKGVKRSNEEAERLWLIAADNGN, VKAQSMLGLYYSTKEPKELEKAFYWHSEACGNGN, LESQGALGLMYLYGQGIRQDTEAALQCLREAAERGN, VYAQGNLVEYYYKMKFFTKCVAFSKRIADYDEVHD, and AMASFYHARCLQLGLGITRDETTAKHYYSKACRLNP.

Interacts with LRP2.

It localises to the cytoplasm. Its function is as follows. May act as an adapter that regulates LRP2 function. The chain is LRP2-binding protein (LRP2BP) from Homo sapiens (Human).